Reading from the N-terminus, the 55-residue chain is Neurotoxin BmKX-A1-S31 (55 aa).

The signal sequence occupies residues 1-23 (MKIFFAVLVILVLFSMLIWTAYG). 3 disulfides stabilise this stretch: cysteine 30-cysteine 45, cysteine 36-cysteine 50, and cysteine 39-cysteine 53.

In terms of tissue distribution, expressed by the venom gland.

The protein resides in the secreted. In Olivierus martensii (Manchurian scorpion), this protein is Neurotoxin BmKX-A1-S31.